Reading from the N-terminus, the 62-residue chain is Small ribosomal subunit protein uS14 (62 aa).

Positions 25, 28, 41, and 44 each coordinate Zn(2+).

It belongs to the universal ribosomal protein uS14 family. Zinc-binding uS14 subfamily. Part of the 30S ribosomal subunit. Contacts proteins S3 and S10. Zn(2+) serves as cofactor.

In terms of biological role, binds 16S rRNA, required for the assembly of 30S particles and may also be responsible for determining the conformation of the 16S rRNA at the A site. The chain is Small ribosomal subunit protein uS14 from Sulfurihydrogenibium sp. (strain YO3AOP1).